Reading from the N-terminus, the 330-residue chain is Exostosin-like 2 (330 aa).

The Cytoplasmic portion of the chain corresponds to 1-22 (MRCCHICKLPGRVMGIRVLRLS). The chain crosses the membrane as a helical; Signal-anchor for type II membrane protein span at residues 23-43 (LVVILVLLLVAGALTALLPSV). The Lumenal segment spans residues 44–330 (KEDKMLMLRR…FPYANYKRKI (287 aa)). Gln-71 contributes to the UDP-N-acetyl-alpha-D-galactosamine binding site. UDP-N-acetyl-alpha-D-glucosamine is bound at residue Gln-71. A glycan (N-linked (GlcNAc...) asparagine) is linked at Asn-74. Positions 75, 100, 129, 134, 150, 151, 152, and 244 each coordinate UDP-N-acetyl-alpha-D-galactosamine. 10 residues coordinate UDP-N-acetyl-alpha-D-glucosamine: Arg-75, Asn-100, Asn-129, Arg-134, Asp-150, Asp-151, Asp-152, Asp-244, Asp-245, and Arg-293. Mn(2+) is bound at residue Asp-152. Cys-243 and Cys-296 form a disulfide bridge. Residue Asp-245 is part of the active site. Position 293 (Arg-293) interacts with UDP-N-acetyl-alpha-D-galactosamine.

The protein belongs to the glycosyltransferase 47 family. It depends on Mn(2+) as a cofactor. Post-translationally, the soluble form derives from the membrane form by proteolytic processing. As to expression, ubiquitous.

The protein resides in the endoplasmic reticulum membrane. Its subcellular location is the secreted. It carries out the reaction 3-O-(beta-D-GlcA-(1-&gt;3)-beta-D-Gal-(1-&gt;3)-beta-D-Gal-(1-&gt;4)-beta-D-Xyl)-L-seryl-[protein] + UDP-N-acetyl-alpha-D-glucosamine = 3-O-(alpha-D-GlcNAc-(1-&gt;4)-beta-D-GlcA-(1-&gt;3)-beta-D-Gal-(1-&gt;3)-beta-D-Gal-(1-&gt;4)-beta-D-Xyl)-L-seryl-[protein] + UDP + H(+). It functions in the pathway glycan metabolism; heparan sulfate biosynthesis. Glycosyltransferase required for the biosynthesis of heparan-sulfate and responsible for the alternating addition of beta-1-4-linked glucuronic acid (GlcA) and alpha-1-4-linked N-acetylglucosamine (GlcNAc) units to nascent heparan sulfate chains. The sequence is that of Exostosin-like 2 (EXTL2) from Homo sapiens (Human).